Here is a 299-residue protein sequence, read N- to C-terminus: ATP phosphoribosyltransferase (299 aa).

This sequence belongs to the ATP phosphoribosyltransferase family. Long subfamily. As to quaternary structure, equilibrium between an active dimeric form, an inactive hexameric form and higher aggregates. Interconversion between the various forms is largely reversible and is influenced by the natural substrates and inhibitors of the enzyme. Mg(2+) serves as cofactor.

The protein localises to the cytoplasm. The catalysed reaction is 1-(5-phospho-beta-D-ribosyl)-ATP + diphosphate = 5-phospho-alpha-D-ribose 1-diphosphate + ATP. Its pathway is amino-acid biosynthesis; L-histidine biosynthesis; L-histidine from 5-phospho-alpha-D-ribose 1-diphosphate: step 1/9. Its activity is regulated as follows. Feedback inhibited by histidine. Catalyzes the condensation of ATP and 5-phosphoribose 1-diphosphate to form N'-(5'-phosphoribosyl)-ATP (PR-ATP). Has a crucial role in the pathway because the rate of histidine biosynthesis seems to be controlled primarily by regulation of HisG enzymatic activity. This is ATP phosphoribosyltransferase from Yersinia pseudotuberculosis serotype O:1b (strain IP 31758).